The sequence spans 195 residues: Pyridoxal 5'-phosphate synthase subunit PdxT (195 aa).

Residue 55–57 coordinates L-glutamine; sequence GES. The Nucleophile role is filled by Cys-84. L-glutamine contacts are provided by residues Arg-111 and 139-140; that span reads IR. Active-site charge relay system residues include His-175 and Glu-177.

It belongs to the glutaminase PdxT/SNO family. In terms of assembly, in the presence of PdxS, forms a dodecamer of heterodimers. Only shows activity in the heterodimer.

It carries out the reaction aldehydo-D-ribose 5-phosphate + D-glyceraldehyde 3-phosphate + L-glutamine = pyridoxal 5'-phosphate + L-glutamate + phosphate + 3 H2O + H(+). The enzyme catalyses L-glutamine + H2O = L-glutamate + NH4(+). It functions in the pathway cofactor biosynthesis; pyridoxal 5'-phosphate biosynthesis. Functionally, catalyzes the hydrolysis of glutamine to glutamate and ammonia as part of the biosynthesis of pyridoxal 5'-phosphate. The resulting ammonia molecule is channeled to the active site of PdxS. The chain is Pyridoxal 5'-phosphate synthase subunit PdxT from Methanosphaerula palustris (strain ATCC BAA-1556 / DSM 19958 / E1-9c).